We begin with the raw amino-acid sequence, 149 residues long: Stathmin (149 aa).

Ala2 bears the N-acetylalanine mark. Ser4 carries the post-translational modification Phosphoserine. Residues Ser4–Glu145 enclose the SLD domain. Lys9 is subject to N6-acetyllysine. A Phosphoserine modification is found at Ser16. A Phosphoserine; by CDK1, MAPK1 and MAPK3 modification is found at Ser25. Lys29 carries the post-translational modification N6-methyllysine. Residue Ser31 is modified to Phosphoserine. Residue Ser38 is modified to Phosphoserine; by CDK1, MAPK1 and MAPK3. A coiled-coil region spans residues Lys41–Lys140. A Phosphoserine; by PKA modification is found at Ser63. N6-acetyllysine is present on residues Lys100 and Lys119. Basic and acidic residues predominate over residues Glu121–Ala143. The tract at residues Glu121–Asp149 is disordered.

This sequence belongs to the stathmin family. In terms of assembly, binds to two alpha/beta-tubulin heterodimers. Interacts with KIST. In terms of processing, many different phosphorylated forms are observed depending on specific combinations among the sites which can be phosphorylated. MAPK is responsible for the phosphorylation of stathmin in response to NGF. Phosphorylation at Ser-16 seems to be required for neuron polarization.

It localises to the cytoplasm. The protein resides in the cytoskeleton. Involved in the regulation of the microtubule (MT) filament system by destabilizing microtubules. Prevents assembly and promotes disassembly of microtubules. Its phosphorylation at Ser-16 may be required for axon formation during neurogenesis. Involved in the control of the learned and innate fear. This chain is Stathmin (STMN1), found in Bos taurus (Bovine).